The following is a 201-amino-acid chain: Pyridoxine/pyridoxamine 5'-phosphate oxidase (201 aa).

Residues 49-54, 64-65, K71, and Q93 contribute to the FMN site; these read RMVLLK and YT. K54 serves as a coordination point for substrate. Substrate-binding residues include Y111, R115, and S119. FMN is bound by residues 128-129 and W172; that span reads QS. 178–180 is a binding site for substrate; the sequence is RLH. Residue R182 coordinates FMN.

The protein belongs to the pyridoxamine 5'-phosphate oxidase family. Homodimer. FMN serves as cofactor.

It carries out the reaction pyridoxamine 5'-phosphate + O2 + H2O = pyridoxal 5'-phosphate + H2O2 + NH4(+). It catalyses the reaction pyridoxine 5'-phosphate + O2 = pyridoxal 5'-phosphate + H2O2. It participates in cofactor metabolism; pyridoxal 5'-phosphate salvage; pyridoxal 5'-phosphate from pyridoxamine 5'-phosphate: step 1/1. The protein operates within cofactor metabolism; pyridoxal 5'-phosphate salvage; pyridoxal 5'-phosphate from pyridoxine 5'-phosphate: step 1/1. Functionally, catalyzes the oxidation of either pyridoxine 5'-phosphate (PNP) or pyridoxamine 5'-phosphate (PMP) into pyridoxal 5'-phosphate (PLP). The sequence is that of Pyridoxine/pyridoxamine 5'-phosphate oxidase from Roseobacter denitrificans (strain ATCC 33942 / OCh 114) (Erythrobacter sp. (strain OCh 114)).